Consider the following 348-residue polypeptide: Protein RecA (348 aa).

65–72 (GPESSGKT) contributes to the ATP binding site. Positions 326–348 (QMGSESLSSSSDDDDIKEESGEE) are disordered. Residues 336–348 (SDDDDIKEESGEE) show a composition bias toward acidic residues.

It belongs to the RecA family.

Its subcellular location is the cytoplasm. Its function is as follows. Can catalyze the hydrolysis of ATP in the presence of single-stranded DNA, the ATP-dependent uptake of single-stranded DNA by duplex DNA, and the ATP-dependent hybridization of homologous single-stranded DNAs. It interacts with LexA causing its activation and leading to its autocatalytic cleavage. The sequence is that of Protein RecA from Campylobacter hominis (strain ATCC BAA-381 / DSM 21671 / CCUG 45161 / LMG 19568 / NCTC 13146 / CH001A).